We begin with the raw amino-acid sequence, 533 residues long: DELLA protein GAI (533 aa).

Residues 1–12 (MKRDHHHHHHQD) are compositionally biased toward basic residues. A disordered region spans residues 1 to 24 (MKRDHHHHHHQDKKTMMMNEEDDG). A DELLA motif motif is present at residues 28–32 (DELLA). The short motif at 50–54 (LEQLE) is the LEXLE motif element. Positions 73–77 (VHYNP) match the VHYNP motif motif. In terms of domain architecture, GRAS spans 160–529 (VDSQENGVRL…RPLIATSAWK (370 aa)). Residues 167–221 (VRLVHALLACAEAVQKENLTVAEALVKQIGFLAVSQIGAMRKVATYFAEALARRI) are leucine repeat I (LRI). The short motif at 174-178 (LACAE) is the LxCxE motif element. The tract at residues 240–305 (QMHFYETCPY…GGPPVFRLTG (66 aa)) is VHIID. The VHIID motif lies at 271–275 (VHVID). The leucine repeat II (LRII) stretch occupies residues 319-351 (EVGCKLAHLAEAIHVEFEYRGFVANTLADLDAS). Residues 363–450 (VAVNSVFELH…EVYLGKQICN (88 aa)) are PFYRE. The LXXLL motif motif lies at 371-375 (LHKLL). An SAW region spans residues 453–529 (ACDGPDRVER…RPLIATSAWK (77 aa)).

Belongs to the GRAS family. DELLA subfamily. As to quaternary structure, interacts directly with the GID2/SLY1 component of the SCF(GID2) complex. Interacts (via N-terminus) with GID1A, GID1B and GID1B (via N-terminus). Interacts with the BOI proteins BOI, BRG1, BRG2, BRG3 and NUP58. Interacts with TOPP4. Interacts with TCP14 and TCP15. Interacts with FLZ5. Binds to and coactivates GAF1/IDD2 and ENY/IDD1 at the promoter of GA20OX2 gene. Binds to PDF2 and ATML1. Interacts with the prefoldin alpha subunits PFD3 and PFD5 in the nucleus. Phosphorylated. Post-translationally, gibberellin (GA) induces dephosphorylation of GAI by TOPP4 and subsequent degradation by the proteasomal pathway. In terms of processing, may be ubiquitinated, as suggested by its interaction with GID2. Ubiquitination is however unsure since in contrast to other DELLA proteins, it is not ubiquitinated and degraded upon GA application. Nevertheless, ubiquitination may be triggered by other processes. As to expression, ubiquitously expressed. Expressed in rosette leaves, roots, stems and inflorescences of greenhouse grown.

It localises to the nucleus. Transcription activation is repressed by gibberellic acid GA(3) in the presence of TPR4. In terms of biological role, transcriptional regulator that acts as a repressor of the gibberellin (GA) signaling pathway. Transcription coactivator of the zinc finger transcription factors GAF1/IDD2 and ENY/IDD1 in regulation of gibberellin homeostasis and signaling. No effect of the BOI proteins on its stability. Probably acts by participating in large multiprotein complexes that repress transcription of GA-inducible genes. Positively regulates XERICO expression. In contrast to RGA, it is less sensitive to GA. Its activity is probably regulated by other phytohormones such as auxin and ethylene. Involved in the regulation of seed dormancy and germination, including glucose-induced delay of seed germination. Involved in the process leading to microtubules (MTs) dissociation in response to gibberellic acid (GA) probably by mediating the translocation of the prefoldin co-chaperone complex from the cytoplasm to the nucleus. The protein is DELLA protein GAI of Arabidopsis thaliana (Mouse-ear cress).